Consider the following 158-residue polypeptide: uncharacterized protein (158 aa).

The region spanning 3-130 (YLQRVTNCVL…DGHILDFMMK (128 aa)) is the Nudix hydrolase domain. Residues 34–55 (GKMESGESVRDSVIREYREETG) carry the Nudix box motif. 2 residues coordinate Mg(2+): glutamate 49 and glutamate 53.

Belongs to the Nudix hydrolase family. Requires Mg(2+) as cofactor.

This is an uncharacterized protein from Bacillus subtilis (strain 168).